Here is a 348-residue protein sequence, read N- to C-terminus: Dihydroorotase (348 aa).

Residues His-13 and His-15 each coordinate Zn(2+). Substrate-binding positions include 15-17 and Asn-41; that span reads HLR. Residues Lys-99, His-136, and His-174 each contribute to the Zn(2+) site. Lys-99 is modified (N6-carboxylysine). His-136 provides a ligand contact to substrate. Residue Leu-219 participates in substrate binding. Zn(2+) is bound at residue Asp-247. Asp-247 is an active-site residue. Substrate is bound by residues His-251 and Ala-263.

It belongs to the metallo-dependent hydrolases superfamily. DHOase family. Class II DHOase subfamily. Homodimer. Requires Zn(2+) as cofactor.

The catalysed reaction is (S)-dihydroorotate + H2O = N-carbamoyl-L-aspartate + H(+). The protein operates within pyrimidine metabolism; UMP biosynthesis via de novo pathway; (S)-dihydroorotate from bicarbonate: step 3/3. Functionally, catalyzes the reversible cyclization of carbamoyl aspartate to dihydroorotate. This is Dihydroorotase from Rhizobium etli (strain ATCC 51251 / DSM 11541 / JCM 21823 / NBRC 15573 / CFN 42).